A 237-amino-acid polypeptide reads, in one-letter code: 7-cyano-7-deazaguanine synthase (237 aa).

Residue 9-19 coordinates ATP; sequence YSGGLDSTTCL. 4 residues coordinate Zn(2+): Cys189, Cys199, Cys202, and Cys205.

The protein belongs to the QueC family. Requires Zn(2+) as cofactor.

The catalysed reaction is 7-carboxy-7-deazaguanine + NH4(+) + ATP = 7-cyano-7-deazaguanine + ADP + phosphate + H2O + H(+). Its pathway is purine metabolism; 7-cyano-7-deazaguanine biosynthesis. Its function is as follows. Catalyzes the ATP-dependent conversion of 7-carboxy-7-deazaguanine (CDG) to 7-cyano-7-deazaguanine (preQ(0)). This Geobacter sulfurreducens (strain ATCC 51573 / DSM 12127 / PCA) protein is 7-cyano-7-deazaguanine synthase.